A 267-amino-acid chain; its full sequence is 4-hydroxy-tetrahydrodipicolinate reductase (267 aa).

Residues 9–14 and aspartate 35 contribute to the NAD(+) site; that span reads GAGGRM. Arginine 36 is an NADP(+) binding site. NAD(+) is bound by residues 99–101 and 123–126; these read GTT and AANY. Histidine 156 (proton donor/acceptor) is an active-site residue. Histidine 157 is a (S)-2,3,4,5-tetrahydrodipicolinate binding site. Residue lysine 160 is the Proton donor of the active site. 166 to 167 contacts (S)-2,3,4,5-tetrahydrodipicolinate; that stretch reads GT.

The protein belongs to the DapB family.

It is found in the cytoplasm. The catalysed reaction is (S)-2,3,4,5-tetrahydrodipicolinate + NAD(+) + H2O = (2S,4S)-4-hydroxy-2,3,4,5-tetrahydrodipicolinate + NADH + H(+). The enzyme catalyses (S)-2,3,4,5-tetrahydrodipicolinate + NADP(+) + H2O = (2S,4S)-4-hydroxy-2,3,4,5-tetrahydrodipicolinate + NADPH + H(+). It functions in the pathway amino-acid biosynthesis; L-lysine biosynthesis via DAP pathway; (S)-tetrahydrodipicolinate from L-aspartate: step 4/4. Catalyzes the conversion of 4-hydroxy-tetrahydrodipicolinate (HTPA) to tetrahydrodipicolinate. The sequence is that of 4-hydroxy-tetrahydrodipicolinate reductase from Halorhodospira halophila (strain DSM 244 / SL1) (Ectothiorhodospira halophila (strain DSM 244 / SL1)).